The sequence spans 572 residues: Oxygen-dependent choline dehydrogenase (572 aa).

9-38 (DYVIIGGGSAGSVLGARLSEDKDKNVLVLE) provides a ligand contact to FAD. Histidine 477 (proton acceptor) is an active-site residue.

Belongs to the GMC oxidoreductase family. FAD is required as a cofactor.

The catalysed reaction is choline + A = betaine aldehyde + AH2. The enzyme catalyses betaine aldehyde + NAD(+) + H2O = glycine betaine + NADH + 2 H(+). The protein operates within amine and polyamine biosynthesis; betaine biosynthesis via choline pathway; betaine aldehyde from choline (cytochrome c reductase route): step 1/1. Functionally, involved in the biosynthesis of the osmoprotectant glycine betaine. Catalyzes the oxidation of choline to betaine aldehyde and betaine aldehyde to glycine betaine at the same rate. The sequence is that of Oxygen-dependent choline dehydrogenase from Staphylococcus epidermidis (strain ATCC 12228 / FDA PCI 1200).